A 330-amino-acid chain; its full sequence is MICVAIDAMGGDFGCEPIIEGTIDALKEREFTAFLVGDQAQMEKFVPKEFINRVKFIQSNEIFEMKEGATNVLRHKESSIYKAVELVRSGECQAVVSAGHSGATMSLATLRVGRLKNVARPPIATLMPTSTGTRTLLLDVGANVDCKAEHIFQFGVMGEAYAKEIMGIKEPKIGILSNGEEDGKGNEVTKEAFKLLKKMKNFVGNAEGSQIFDGSMDVIVCDGFVGNIALKSSEGVAHAMNKLIKKEVKKSPLAIAGAVLMKKVFKIVRKNTDYDEYGGAPLLGVKNCVIISHGKSTPKAIKNAIFQALKFSNSNINSVISNELEKFKNE.

Belongs to the PlsX family. In terms of assembly, homodimer. Probably interacts with PlsY.

Its subcellular location is the cytoplasm. It catalyses the reaction a fatty acyl-[ACP] + phosphate = an acyl phosphate + holo-[ACP]. The protein operates within lipid metabolism; phospholipid metabolism. Functionally, catalyzes the reversible formation of acyl-phosphate (acyl-PO(4)) from acyl-[acyl-carrier-protein] (acyl-ACP). This enzyme utilizes acyl-ACP as fatty acyl donor, but not acyl-CoA. This Campylobacter hominis (strain ATCC BAA-381 / DSM 21671 / CCUG 45161 / LMG 19568 / NCTC 13146 / CH001A) protein is Phosphate acyltransferase.